The primary structure comprises 428 residues: Pyruvate dehydrogenase E1 component subunit alpha-3, chloroplastic (428 aa).

Residues 1 to 61 (MATAFAPTKL…NATRRSPVVS (61 aa)) constitute a chloroplast transit peptide. Residues histidine 115, tyrosine 141, arginine 142, alanine 190, isoleucine 192, aspartate 227, glycine 228, and asparagine 256 each contribute to the pyruvate site. Thiamine diphosphate-binding residues include tyrosine 141, arginine 142, alanine 190, isoleucine 192, aspartate 227, glycine 228, asparagine 256, and histidine 325. Residue aspartate 227 participates in Mg(2+) binding. Mg(2+) is bound at residue asparagine 256.

Tetramer of 2 alpha and 2 beta subunits. Thiamine diphosphate is required as a cofactor. Requires Mg(2+) as cofactor.

The protein resides in the plastid. It is found in the chloroplast. The enzyme catalyses N(6)-[(R)-lipoyl]-L-lysyl-[protein] + pyruvate + H(+) = N(6)-[(R)-S(8)-acetyldihydrolipoyl]-L-lysyl-[protein] + CO2. In terms of biological role, the pyruvate dehydrogenase complex catalyzes the overall conversion of pyruvate to acetyl-CoA and CO(2). It contains multiple copies of three enzymatic components: pyruvate dehydrogenase (E1), dihydrolipoamide acetyltransferase (E2) and lipoamide dehydrogenase (E3). The polypeptide is Pyruvate dehydrogenase E1 component subunit alpha-3, chloroplastic (PDH-E1 ALPHA) (Arabidopsis thaliana (Mouse-ear cress)).